We begin with the raw amino-acid sequence, 445 residues long: Elongation factor 1-alpha (445 aa).

One can recognise a tr-type G domain in the interval 5 to 230 (KVHISLVVIG…DNLEPPKRPS (226 aa)). Residues 14–21 (GHVDSGKS) form a G1 region. 14-21 (GHVDSGKS) contacts GTP. At Lys55 the chain carries N6,N6-dimethyllysine. Residues 70 to 74 (CITID) form a G2 region. Lys79 is subject to N6,N6,N6-trimethyllysine. Residues 91-94 (DAPG) are G3. GTP is bound by residues 91–95 (DAPGH) and 153–156 (NKFD). Residues 153 to 156 (NKFD) form a G4 region. Position 187 is an N6,N6,N6-trimethyllysine (Lys187). A G5 region spans residues 194–196 (SGW). Residue Lys261 is modified to N6-methyllysine. N6,N6,N6-trimethyllysine occurs at positions 306 and 396.

The protein belongs to the TRAFAC class translation factor GTPase superfamily. Classic translation factor GTPase family. EF-Tu/EF-1A subfamily.

Its subcellular location is the cytoplasm. Functionally, this protein promotes the GTP-dependent binding of aminoacyl-tRNA to the A-site of ribosomes during protein biosynthesis. The polypeptide is Elongation factor 1-alpha (TEF) (Euglena gracilis).